Consider the following 244-residue polypeptide: 5-oxoprolinase subunit A (244 aa).

The protein belongs to the LamB/PxpA family. Forms a complex composed of PxpA, PxpB and PxpC.

The catalysed reaction is 5-oxo-L-proline + ATP + 2 H2O = L-glutamate + ADP + phosphate + H(+). Its function is as follows. Catalyzes the cleavage of 5-oxoproline to form L-glutamate coupled to the hydrolysis of ATP to ADP and inorganic phosphate. The protein is 5-oxoprolinase subunit A of Citrobacter koseri (strain ATCC BAA-895 / CDC 4225-83 / SGSC4696).